Consider the following 173-residue polypeptide: NADH-ubiquinone oxidoreductase chain 6 (173 aa).

The next 5 helical transmembrane spans lie at 1–21, 28–48, 53–73, 87–107, and 139–159; these read MVYFVSMMMIGLILGLMGVAS, AALGLVTAAGVGCGLLVSYGG, LILFLIYLGGMLVVFAYTAAL, VLMYVGIYLTGLVIAGKYFLV, and LGGWMLVLSGWVLLVTLFVVL.

This sequence belongs to the complex I subunit 6 family.

It is found in the mitochondrion membrane. The enzyme catalyses a ubiquinone + NADH + 5 H(+)(in) = a ubiquinol + NAD(+) + 4 H(+)(out). Its function is as follows. Core subunit of the mitochondrial membrane respiratory chain NADH dehydrogenase (Complex I) that is believed to belong to the minimal assembly required for catalysis. Complex I functions in the transfer of electrons from NADH to the respiratory chain. The immediate electron acceptor for the enzyme is believed to be ubiquinone. The polypeptide is NADH-ubiquinone oxidoreductase chain 6 (MT-ND6) (Scyliorhinus canicula (Small-spotted catshark)).